Reading from the N-terminus, the 361-residue chain is Transmembrane protein 116 (361 aa).

7 helical membrane passes run 29-49 (WIQMTMAVLSILGAGSIILYA), 64-84 (FLLSLTDLLLALSWLCGGLLF), 103-123 (TLYMASFFYTLHYVWVLYTGL), 147-167 (LGPVLSCLLPLLLTAPVFVAG), 210-230 (CMAIFLGTFLITIVGMSIFMG), 261-281 (MVLYPSAFFFCWGPALLLATM), and 295-315 (VALYILQAFTSASQGLLNCLV).

The protein localises to the membrane. This Danio rerio (Zebrafish) protein is Transmembrane protein 116 (tmem116).